The sequence spans 525 residues: Chromosomal replication initiator protein DnaA (525 aa).

The interval 1-71 is domain I, interacts with DnaA modulators; the sequence is MNDFWQHCSA…ADLAREFWNT (71 aa). The interval 71 to 188 is domain II; sequence TPIEVQFVLD…GEADSMYERS (118 aa). The interval 160 to 182 is disordered; sequence AAAGRRTWRPGPGAAPANGGEAD. Over residues 169-181 the composition is skewed to low complexity; it reads PGPGAAPANGGEA. The segment at 189 to 405 is domain III, AAA+ region; the sequence is KLNPVLTFDN…GALRKILAYS (217 aa). Positions 233, 235, 236, and 237 each coordinate ATP. The interval 406–525 is domain IV, binds dsDNA; the sequence is KFHGREISIE…LHVLEQTLKG (120 aa).

This sequence belongs to the DnaA family. In terms of assembly, oligomerizes as a right-handed, spiral filament on DNA at oriC.

Its subcellular location is the cytoplasm. Functionally, plays an essential role in the initiation and regulation of chromosomal replication. ATP-DnaA binds to the origin of replication (oriC) to initiate formation of the DNA replication initiation complex once per cell cycle. Binds the DnaA box (a 9 base pair repeat at the origin) and separates the double-stranded (ds)DNA. Forms a right-handed helical filament on oriC DNA; dsDNA binds to the exterior of the filament while single-stranded (ss)DNA is stabiized in the filament's interior. The ATP-DnaA-oriC complex binds and stabilizes one strand of the AT-rich DNA unwinding element (DUE), permitting loading of DNA polymerase. After initiation quickly degrades to an ADP-DnaA complex that is not apt for DNA replication. Binds acidic phospholipids. This chain is Chromosomal replication initiator protein DnaA, found in Burkholderia cenocepacia (strain ATCC BAA-245 / DSM 16553 / LMG 16656 / NCTC 13227 / J2315 / CF5610) (Burkholderia cepacia (strain J2315)).